The chain runs to 673 residues: Thimet-like oligopeptidase (673 aa).

His-465 contacts Zn(2+). The active site involves Glu-466. Zn(2+)-binding residues include His-469 and His-472.

It belongs to the peptidase M3 family. Requires Zn(2+) as cofactor.

This Dictyostelium discoideum (Social amoeba) protein is Thimet-like oligopeptidase.